Here is a 378-residue protein sequence, read N- to C-terminus: Probable E3 ubiquitin-protein ligase LUL3 (378 aa).

The segment covering 1–21 (MGISLSKRRRDNNNNHHHPHH) has biased composition (basic residues). The tract at residues 1 to 79 (MGISLSKRRR…PPSQISYRPY (79 aa)) is disordered. G2 is lipidated: N-myristoyl glycine. Composition is skewed to pro residues over residues 29-38 (DPPPQQPPPQ) and 55-72 (SLPP…PPPS). Residues 164-283 (FVFDALFDGS…GSFKVKVMKQ (120 aa)) form a DAR2 domain region. The RING-type; atypical zinc finger occupies 321 to 360 (CVICLTEPKDTAVMPCRHLCLCSDCAEELRFQTNKCPICR).

It belongs to the RING-type zinc finger family. LOG2 subfamily. Post-translationally, myristoylated (in vitro).

The catalysed reaction is S-ubiquitinyl-[E2 ubiquitin-conjugating enzyme]-L-cysteine + [acceptor protein]-L-lysine = [E2 ubiquitin-conjugating enzyme]-L-cysteine + N(6)-ubiquitinyl-[acceptor protein]-L-lysine.. Its pathway is protein modification; protein ubiquitination. Acts as an E3 ubiquitin-protein ligase, or as part of E3 complex, which accepts ubiquitin from specific E2 ubiquitin-conjugating enzymes and then transfers it to substrates (in vitro). This Arabidopsis thaliana (Mouse-ear cress) protein is Probable E3 ubiquitin-protein ligase LUL3 (LUL3).